Here is a 299-residue protein sequence, read N- to C-terminus: Phosphatidylserine decarboxylase proenzyme (299 aa).

Catalysis depends on charge relay system; for autoendoproteolytic cleavage activity residues Asp-90, His-147, and Ser-254. Ser-254 serves as the catalytic Schiff-base intermediate with substrate; via pyruvic acid; for decarboxylase activity. Residue Ser-254 is modified to Pyruvic acid (Ser); by autocatalysis.

The protein belongs to the phosphatidylserine decarboxylase family. PSD-B subfamily. Prokaryotic type I sub-subfamily. Heterodimer of a large membrane-associated beta subunit and a small pyruvoyl-containing alpha subunit. Requires pyruvate as cofactor. Post-translationally, is synthesized initially as an inactive proenzyme. Formation of the active enzyme involves a self-maturation process in which the active site pyruvoyl group is generated from an internal serine residue via an autocatalytic post-translational modification. Two non-identical subunits are generated from the proenzyme in this reaction, and the pyruvate is formed at the N-terminus of the alpha chain, which is derived from the carboxyl end of the proenzyme. The autoendoproteolytic cleavage occurs by a canonical serine protease mechanism, in which the side chain hydroxyl group of the serine supplies its oxygen atom to form the C-terminus of the beta chain, while the remainder of the serine residue undergoes an oxidative deamination to produce ammonia and the pyruvoyl prosthetic group on the alpha chain. During this reaction, the Ser that is part of the protease active site of the proenzyme becomes the pyruvoyl prosthetic group, which constitutes an essential element of the active site of the mature decarboxylase.

It is found in the cell membrane. It catalyses the reaction a 1,2-diacyl-sn-glycero-3-phospho-L-serine + H(+) = a 1,2-diacyl-sn-glycero-3-phosphoethanolamine + CO2. Its pathway is phospholipid metabolism; phosphatidylethanolamine biosynthesis; phosphatidylethanolamine from CDP-diacylglycerol: step 2/2. Functionally, catalyzes the formation of phosphatidylethanolamine (PtdEtn) from phosphatidylserine (PtdSer). This chain is Phosphatidylserine decarboxylase proenzyme, found in Erwinia tasmaniensis (strain DSM 17950 / CFBP 7177 / CIP 109463 / NCPPB 4357 / Et1/99).